Reading from the N-terminus, the 886-residue chain is Peptidyl-lysine N-acetyltransferase Pat (886 aa).

An ATP-grasp domain is found at 487-523 (QPILHAYGLHTLPTWIASDSAEAVHIAEQIGYPVALK). Residue 513–524 (AEQIGYPVALKL) participates in ATP binding. In terms of domain architecture, N-acetyltransferase spans 726–881 (CLFRPILPED…GIVGLTLNLA (156 aa)).

In the N-terminal section; belongs to the acetate CoA ligase alpha subunit family. The protein in the central section; belongs to the acetate CoA ligase beta subunit family. As to quaternary structure, monomer in the absence of acetyl-CoA. Oligomerizes to a tetrameric form in the presence of acetyl-CoA.

It catalyses the reaction L-lysyl-[protein] + acetyl-CoA = N(6)-acetyl-L-lysyl-[protein] + CoA + H(+). With respect to regulation, exhibits positive cooperativity. It may be the result of acetyl-CoA binding to two distinct sites, or the result of subunit interactions. Its function is as follows. Acetylates and inactivates the acetyl-CoA synthase (Acs). Can also acetylate other central metabolic enzymes in response to environmental changes. The polypeptide is Peptidyl-lysine N-acetyltransferase Pat (pat) (Salmonella typhimurium (strain LT2 / SGSC1412 / ATCC 700720)).